The chain runs to 124 residues: Phosphoribosyl-AMP cyclohydrolase (124 aa).

Mg(2+) is bound at residue D82. Residue C83 participates in Zn(2+) binding. The Mg(2+) site is built by D84 and D86. Zn(2+) contacts are provided by C99 and C106.

It belongs to the PRA-CH family. As to quaternary structure, homodimer. It depends on Mg(2+) as a cofactor. Zn(2+) serves as cofactor.

It is found in the cytoplasm. It catalyses the reaction 1-(5-phospho-beta-D-ribosyl)-5'-AMP + H2O = 1-(5-phospho-beta-D-ribosyl)-5-[(5-phospho-beta-D-ribosylamino)methylideneamino]imidazole-4-carboxamide. It participates in amino-acid biosynthesis; L-histidine biosynthesis; L-histidine from 5-phospho-alpha-D-ribose 1-diphosphate: step 3/9. Functionally, catalyzes the hydrolysis of the adenine ring of phosphoribosyl-AMP. In Rhizorhabdus wittichii (strain DSM 6014 / CCUG 31198 / JCM 15750 / NBRC 105917 / EY 4224 / RW1) (Sphingomonas wittichii), this protein is Phosphoribosyl-AMP cyclohydrolase.